Reading from the N-terminus, the 440-residue chain is Probable secretory pathway GDP dissociation inhibitor 1 (440 aa).

Belongs to the Rab GDI family.

In Schizosaccharomyces pombe (strain 972 / ATCC 24843) (Fission yeast), this protein is Probable secretory pathway GDP dissociation inhibitor 1 (gdi1).